Consider the following 417-residue polypeptide: GTP-binding protein YPT11 (417 aa).

Residues 1 to 34 (MSQRKRYSLNVVTSPSIPSPTPSAPIRTNESNWE) form a disordered region. GTP contacts are provided by residues 97 to 104 (GDANVGKT), 228 to 232 (DTAGQ), and 292 to 295 (NKID). Residues Cys415 and Cys416 are each lipidated (S-geranylgeranyl cysteine).

Belongs to the small GTPase superfamily. Rab family. Interacts with MYO2 (via C-terminal tail domain). Interacts with YIF1, YIP3, YIP4 and YIP5.

Its subcellular location is the endoplasmic reticulum membrane. The protein localises to the bud tip. The protein resides in the bud neck. In terms of biological role, involved in the positive control of both endoplasmic reticulum (ER) and mitochondrion inheritance during cell divison. Required for the MYO2-dependent retention of newly inherited mitochondria at the bud tip in developing daughter cells. The polypeptide is GTP-binding protein YPT11 (YPT11) (Saccharomyces cerevisiae (strain YJM789) (Baker's yeast)).